The following is a 147-amino-acid chain: MGLEKSFLLFSLLVLVLGWVQPSLGVESRETQTQKFQRQHMDEEGHFPSSPTYCNQMMKSRGMTSGSCKPMNTFVHEPLETVQAICSQGQVTCKNGKRNCHKSSSTLRITDCRLKGSSKYPKCDYTTTDSQKHIIIACDVVHLDATV.

The N-terminal stretch at M1–G25 is a signal peptide. 2 residues coordinate substrate: K35 and R38. H40 functions as the Proton acceptor in the catalytic mechanism. Cystine bridges form between C54/C112, C68/C123, C86/C138, and C93/C100. Residues K69–T73, K94, and R113 contribute to the substrate site. Residue H142 is the Proton donor of the active site.

It belongs to the pancreatic ribonuclease family. In terms of assembly, monomer.

Its subcellular location is the secreted. The enzyme catalyses an [RNA] containing cytidine + H2O = an [RNA]-3'-cytidine-3'-phosphate + a 5'-hydroxy-ribonucleotide-3'-[RNA].. The catalysed reaction is an [RNA] containing uridine + H2O = an [RNA]-3'-uridine-3'-phosphate + a 5'-hydroxy-ribonucleotide-3'-[RNA].. Functionally, endonuclease that catalyzes the cleavage of RNA on the 3' side of pyrimidine nucleotides. Acts on single-stranded and double-stranded RNA. This is Ribonuclease pancreatic gamma-type from Rattus rattus (Black rat).